We begin with the raw amino-acid sequence, 488 residues long: Cis-aconitate decarboxylase (488 aa).

It belongs to the PrpD family. In terms of assembly, homodimer. Expressed in LPS-tolerized macrophages (at protein level). Expressed in the luminal epithelial cells of pregnant uterus. Expressed in microglia and macrophage cells.

Its subcellular location is the mitochondrion. It catalyses the reaction cis-aconitate + H(+) = itaconate + CO2. Functionally, cis-aconitate decarboxylase that catalyzes production of itaconate and is involved in the inhibition of the inflammatory response. Acts as a negative regulator of the Toll-like receptors (TLRs)-mediated inflammatory innate response by stimulating the tumor necrosis factor alpha-induced protein TNFAIP3 expression via reactive oxygen species (ROS) in LPS-tolerized macrophages. Involved in antimicrobial response of innate immune cells; ACOD1-mediated itaconic acid production contributes to the antimicrobial activity of macrophages by generating itaconate, leading to alkylation of proteins, such as TFEB. Involved in antiviral response following infection by flavivirus in neurons: ACOD1-mediated itaconate production inhibits the activity of succinate dehydrogenase, generating a metabolic state in neurons that suppresses replication of viral genomes. Plays a role in the embryo implantation. This Mus musculus (Mouse) protein is Cis-aconitate decarboxylase.